The sequence spans 764 residues: uncharacterized protein (764 aa).

The Lumenal segment spans residues 1–646; the sequence is MKEENGFAGF…LTKLYTFPFT (646 aa). The interval 22–173 is disordered; that stretch reads LNDTAPTKSQ…SAITAPSRKV (152 aa). Residue Asn23 is glycosylated (N-linked (GlcNAc...) asparagine). 2 stretches are compositionally biased toward polar residues: residues 25-41 and 61-82; these read TAPT…NNEG and SEAS…QSPS. Position 80 is a phosphoserine (Ser80). Residues 98-113 show a composition bias toward acidic residues; the sequence is ENQENEADEAENEETS. A glycan (N-linked (GlcNAc...) asparagine) is linked at Asn118. Positions 118–145 are enriched in basic and acidic residues; that stretch reads NHTENTEEIAEESRPLERTHSGSNHHEA. Positions 158 to 173 are enriched in polar residues; the sequence is NTLSQGSAITAPSRKV. Positions 197-264 constitute a GRAM domain; that stretch reads RDFHRIFKVL…TEIVSVEKKS (68 aa). Asn240 and Asn330 each carry an N-linked (GlcNAc...) asparagine glycan. The tract at residues 320–406 is disordered; that stretch reads ASGNHHSGSS…DGNSVKKMNE (87 aa). Positions 321 to 330 are enriched in low complexity; that stretch reads SGNHHSGSSN. Residues 331 to 340 show a composition bias toward polar residues; it reads QSINADSSAG. Over residues 352–371 the composition is skewed to acidic residues; it reads ANDESSEDDDEDNNTDEANE. N-linked (GlcNAc...) asparagine glycans are attached at residues Asn364 and Asn376. The span at 389 to 399 shows a compositional bias: polar residues; the sequence is HSDNVVLSDGN. Positions 432–598 constitute a VASt domain; the sequence is LAHVLCSDVV…AFENYKVSPK (167 aa). N-linked (GlcNAc...) asparagine glycosylation is found at Asn442 and Asn554. Basic residues predominate over residues 598 to 613; sequence KGRRKKITKHTKKKNK. Residues 598 to 626 are disordered; that stretch reads KGRRKKITKHTKKKNKHASETSVAPEKVD. Asn627 carries N-linked (GlcNAc...) asparagine glycosylation. The helical transmembrane segment at 647-667 threads the bilayer; that stretch reads IITWLMHPTHLLLVVMFSMLV. The Cytoplasmic portion of the chain corresponds to 668–764; that stretch reads LQWWYMQQIL…LRKLEASGYI (97 aa).

This sequence belongs to the YSP2 family.

The protein localises to the membrane. This is an uncharacterized protein from Schizosaccharomyces pombe (strain 972 / ATCC 24843) (Fission yeast).